We begin with the raw amino-acid sequence, 355 residues long: cGAMP-activated phospholipase (355 aa).

Residues 17 to 214 (LSLNGGGARG…VANNPSFIGL (198 aa)) form the PNPLA domain. Residues 21–26 (GGGARG) carry the GXGXXG motif. The GXSXG motif lies at 60-64 (GTSIG). The active-site Nucleophile is serine 62. The active-site Proton acceptor is the aspartate 201. Positions 201–203 (DGG) match the DGA/G motif.

It belongs to the patatin family.

It carries out the reaction a 1,2-diacyl-sn-glycero-3-phosphocholine + H2O = a 2-acyl-sn-glycero-3-phosphocholine + a fatty acid + H(+). The catalysed reaction is 1,2-di-(9Z-octadecenoyl)-sn-glycero-3-phosphoethanolamine + 2 H2O = sn-glycero-3-phosphoethanolamine + 2 (9Z)-octadecenoate + 2 H(+). With respect to regulation, phospholipase activity is specifically activated upon 3',3'-cGAMP (cGAMP) binding. Is not activated by the other cyclic dinucleotides 3',3'-cUAMP, 3',3'-c-diAMP and 3',3'-c-diGMP. Therefore, is specifically activated by only the nucleotide synthesized from its adjacently encoded nucleotidyltransferase (DncV). The cGAMP-activation of lipase is inhibited by T4 phage protein Acb2 (Vs.4). In terms of biological role, effector phospholipase of a CBASS antiviral system. CBASS (cyclic oligonucleotide-based antiphage signaling system) provides immunity against bacteriophages. The CD-NTase protein (DncV) synthesizes cyclic nucleotides in response to infection; these serve as specific second messenger signals. The signals activate a diverse range of effectors, leading to bacterial cell death and thus abortive phage infection. A type II-A(GA) CBASS system. Phospholipase that is activated upon binding to the cyclic dinucleotide (CDN) second messenger 3',3'-cyclic GMP-AMP (3',3'-cGAMP). Then degrades phosphatidylethanolamine (PE) and phosphatidylglycerol (PG), the major phospholipids in the cell membrane of V.cholerae, releasing 16:1 and 18:1 free fatty acids. Upon expression in E.coli with cognate DncV, the cell inner membrane shrinks and separates from the cell wall. Functionally, protects E.coli against phage infection. When the CBASS operon (capV-dncV-cap2-cap3) is introduced in E.coli MG1655 there is about 100-fold protection against phages P1 and T2. When the operon is introduced in E.coli MG1655 there is a more than 10(3) decrease in the efficiency of T2 plaque formation. Protects 100-fold against phage T5, offers no protection against T7. When the operon is introduced in E.coli MG1655 it protects against phages T2, T4, T5 and T6. Another paper shows the operon confers protection against phages P1, T2, T5 and T6 but not T4 or lambda. The protein is cGAMP-activated phospholipase of Vibrio cholerae serotype O1 (strain ATCC 39315 / El Tor Inaba N16961).